Here is a 147-residue protein sequence, read N- to C-terminus: Large ribosomal subunit protein uL15 (147 aa).

Residues 1-62 (MDLSNLRPAI…GQMPLQRRLP (62 aa)) form a disordered region. Gly residues-rich tracts occupy residues 21 to 31 (RGPGSGNGKTA) and 42 to 52 (SGGGVKPGFEG).

It belongs to the universal ribosomal protein uL15 family. Part of the 50S ribosomal subunit.

In terms of biological role, binds to the 23S rRNA. In Syntrophotalea carbinolica (strain DSM 2380 / NBRC 103641 / GraBd1) (Pelobacter carbinolicus), this protein is Large ribosomal subunit protein uL15.